We begin with the raw amino-acid sequence, 1605 residues long: Ribosome-binding protein 1 (1605 aa).

Residues 1-7 (MDIYDTQ) lie on the Lumenal side of the membrane. Residues 8 to 28 (TLGVVVFGGFMVVSAIGIFLV) traverse the membrane as a helical segment. Residues 29–1605 (STFSMKETSY…GSSSKEGTSV (1577 aa)) are Cytoplasmic-facing. A disordered region spans residues 44 to 88 (NQRKEMAKTHHQKGEKKKKEKTVEKKGKTKKKEEKPNGKIPEHDL). Positions 52–63 (THHQKGEKKKKE) are enriched in basic residues. Over residues 64-88 (KTVEKKGKTKKKEEKPNGKIPEHDL) the composition is skewed to basic and acidic residues. Residue Ser111 is modified to Phosphoserine. Positions 114–150 (SSVGHTPIATVPAMPQEKLASSPKDRKKKEKKVAKVE) are disordered. Residue Lys148 forms a Glycyl lysine isopeptide (Lys-Gly) (interchain with G-Cter in SUMO2) linkage. 2 positions are modified to phosphoserine: Ser159 and Ser165. Residues 172 to 849 (ATPKEVPMVA…PGPPDCDGPL (678 aa)) are disordered. 61 tandem repeats follow at residues 196–205 (SQGKKGQGAQ), 206–215 (NQAKKGEGAQ), 216–225 (NQGKKGEGAQ), 226–235 (NQAKKGEGAQ), 236–245 (NQAKKGEGAQ), 246–255 (NQGKKGEGAQ), 256–265 (NQAKKGEGGQ), 266–275 (NQAKKGEGAQ), 276–285 (NQGKKGEGAQ), 286–295 (NQGKKGEGAQ), 296–305 (NQAKKGEGAQ), 306–315 (NQAKKGEGAQ), 316–325 (NQGKKGEGAQ), 326–335 (NQSKKGEGAQ), 336–345 (NQAKKGEGGQ), 346–355 (NQAKKGEGAQ), 356–365 (NQAKKGEGAQ), 366–375 (NQAKKGEGVQ), 376–385 (NQAKKGVEGA), 386–395 (QNQGKKGEAN), 396–405 (QNQAKKGEGG), 406–415 (QNQTKKGEGP), 416–425 (QNQGKKGEAA), 426–435 (QKQDKKIEGA), 436–445 (QNQGKKPEGT), 446–455 (SNQGKKGEGA), 456–465 (QNQGKKGEGA), 466–475 (QNQSKKGEGA), 476–485 (QNQAKKGEGG), 486–495 (QNQAKKGEGA), 496–505 (QNQAKKGEGA), 506–515 (QNQAKKGEGV), 516–525 (QNQAKKGVEG), 527–536 (QNQGKKGEAN), 537–546 (QNQAKKGEGG), 547–556 (QNQTKKGEGP), 557–566 (QNQGKKGEAA), 567–576 (QKQDKKIEGA), 577–586 (QNQGKKPEGT), 587–596 (SNQGKKGEGA), 597–606 (QNQGKKGEGA), 607–616 (QNQGKKGEGA), 617–626 (QNQGKKGEGA), 628–637 (NQGKKGEGAQ), 638–647 (NQGKKGEGAQ), 648–657 (NQGKKGEGAQ), 658–667 (NQGKKGEGPQ), 668–677 (NQAKKGEGAQ), 678–687 (NQGKKGEGAQ), 688–697 (NQGKKGEGAQ), 698–707 (NQGKKAEGVQ), 708–717 (SQSKKGEGTQ), 718–727 (NQGKKGDGNP), 729–738 (QGKKGEGASN), 739–748 (QNRKTDTVAN), 749–758 (QGTKQEGVSN), 759–768 (QVKKSEGSPN), 769–778 (QGKKAEGAPN), 779–788 (QGKKKDGSPS), 789–798 (QAKKVDAAAN), and 799–808 (QGKKSEMAPA). A 61 X 10 AA tandem repeats of [NSQ]-[NKQVGA]-[GSAQKRT]-[ASGDTK]-[KGTQSAV]-[KGAED]-[EQVGIPTDMA]-[EGVAS]-[AGVPETNS]-[AQNGPTVS] region spans residues 196-808 (SQGKKGQGAQ…QGKKSEMAPA (613 aa)). Residues 197-208 (QGKKGQGAQNQA) are compositionally biased toward low complexity. Polar residues-rich tracts occupy residues 224 to 258 (AQNQ…QNQA), 274 to 338 (AQNQ…QNQA), 354 to 378 (AQNQ…QNQA), and 385 to 399 (AQNQ…QNQA). A compositionally biased stretch (basic and acidic residues) spans 420-433 (KKGEAAQKQDKKIE). 3 stretches are compositionally biased toward polar residues: residues 435 to 479 (AQNQ…QNQA), 495 to 519 (AQNQ…QNQA), and 526 to 540 (AQNQ…QNQA). Basic and acidic residues predominate over residues 561-574 (KKGEAAQKQDKKIE). Polar residues-rich tracts occupy residues 576–720 (AQNQ…QNQG) and 736–769 (ASNQ…SPNQ). At Ser786 the chain carries Phosphoserine. Residues 811 to 821 (QKASMVQSQEA) are compositionally biased toward polar residues. Ser818 is subject to Phosphoserine. Residue Lys823 forms a Glycyl lysine isopeptide (Lys-Gly) (interchain with G-Cter in SUMO1) linkage. An N6-acetyllysine modification is found at Lys1135. Residues Ser1162 and Ser1178 each carry the phosphoserine modification. Disordered stretches follow at residues 1460 to 1481 (MRSH…AEQD) and 1571 to 1605 (TTQE…GTSV). The span at 1576-1598 (LTKEKDTVKKLQEQLGKAEDGSS) shows a compositional bias: basic and acidic residues.

In terms of tissue distribution, widely expressed.

The protein resides in the endoplasmic reticulum membrane. Its function is as follows. Acts as a ribosome receptor and mediates interaction between the ribosome and the endoplasmic reticulum membrane. The sequence is that of Ribosome-binding protein 1 (Rrbp1) from Mus musculus (Mouse).